The primary structure comprises 32 residues: Protamine-3A (32 aa).

The tract at residues 1-32 (PRRRRRSSSRPIRRRRRPRVSRRRRRGGRRRR) is disordered.

Testis.

The protein localises to the nucleus. Its subcellular location is the chromosome. Its function is as follows. Protamines substitute for histones in the chromatin of sperm during the haploid phase of spermatogenesis. They compact sperm DNA into a highly condensed, stable and inactive complex. The chain is Protamine-3A from Oncorhynchus mykiss (Rainbow trout).